The primary structure comprises 676 residues: Nicastrin (676 aa).

The first 28 residues, 1-28 (MAMGLIRLLSIAFTLVLLSILPLHLSLA), serve as a signal peptide directing secretion. Over 29–644 (DEITSIESVP…VYTVQHSAYD (616 aa)) the chain is Extracellular. Residues asparagine 58, asparagine 336, asparagine 371, asparagine 444, asparagine 480, asparagine 555, and asparagine 611 are each glycosylated (N-linked (GlcNAc...) asparagine). Residues 645-665 (NAVLVAGITVTTLAYIGILAA) traverse the membrane as a helical segment. Residues 666–676 (KSIITKALKQD) are Cytoplasmic-facing.

Belongs to the nicastrin family. In terms of assembly, probable component of the gamma-secretase complex, a complex composed of a presenilin homodimer, nicastrin, APH1 and PEN2.

It is found in the membrane. Probable subunit of the gamma-secretase complex, an endoprotease complex that catalyzes the intramembrane cleavage of integral membrane proteins such as Notch. The protein is Nicastrin of Arabidopsis thaliana (Mouse-ear cress).